Here is a 653-residue protein sequence, read N- to C-terminus: Transcription factor Ken 1 (653 aa).

In terms of domain architecture, BTB spans 35–103 (TDLLLICDGK…LYSGQVYVRS (69 aa)). 4 disordered regions span residues 126-215 (NSDG…DRDR), 234-305 (NNHP…SDDA), 429-451 (LSNN…PPSA), and 512-534 (ELSA…GSGS). Residues 145–157 (NRNTEGITGSSVV) show a composition bias toward polar residues. Over residues 251–272 (GHHHHHHHHHHHRQLHQIKTRS) the composition is skewed to basic residues. Positions 286–299 (SDPVNLSIVKQQQD) are enriched in polar residues. Low complexity predominate over residues 430-444 (SNNNNSSSNNNNNNN). Residues 520–534 (AGGGGGGSGGNGSGS) show a composition bias toward gly residues. 3 consecutive C2H2-type zinc fingers follow at residues 555-577 (YRCE…LRVH), 583-606 (FACR…CSVH), and 619-641 (YTCC…LSGH).

The protein resides in the nucleus. Transcription factor required for terminalia development. Negative regulator of the JAK/STAT pathway: represses JAK/STAT-dependent expression of ventral veins lacking (vvl) in the posterior spiracles. This chain is Transcription factor Ken 1, found in Culex quinquefasciatus (Southern house mosquito).